Consider the following 105-residue polypeptide: Small ribosomal subunit protein bS20 (105 aa).

Belongs to the bacterial ribosomal protein bS20 family.

Its function is as follows. Binds directly to 16S ribosomal RNA. The chain is Small ribosomal subunit protein bS20 from Caldanaerobacter subterraneus subsp. tengcongensis (strain DSM 15242 / JCM 11007 / NBRC 100824 / MB4) (Thermoanaerobacter tengcongensis).